The primary structure comprises 138 residues: Proline-rich protein 34 (138 aa).

Positions 22-37 (SAPTSPPNPATRPAPG) are enriched in pro residues. Disordered stretches follow at residues 22–55 (SAPTSPPNPATRPAPGPGRRARCPQSAHPAPTRG) and 81–107 (APRLPHPAARARRRAWHGARLPGSPAR).

This Homo sapiens (Human) protein is Proline-rich protein 34 (PRR34).